We begin with the raw amino-acid sequence, 122 residues long: Double-headed protease inhibitor, submandibular gland (122 aa).

Kazal-like domains are found at residues 10 to 70 (GGRK…ECDI) and 71 to 121 (ECTQ…QCQS). 6 disulfides stabilise this stretch: Cys-16–Cys-50, Cys-28–Cys-47, Cys-36–Cys-68, Cys-72–Cys-101, Cys-79–Cys-98, and Cys-87–Cys-119.

The protein localises to the secreted. Functionally, this inhibitor is composed of two homologous actively inhibiting halves: one which inhibits trypsin, the other which inhibits elastase. The chain is Double-headed protease inhibitor, submandibular gland from Martes martes (European pine marten).